Reading from the N-terminus, the 193-residue chain is Fe/S biogenesis protein NfuA (193 aa).

[4Fe-4S] cluster contacts are provided by C151 and C154.

Belongs to the NfuA family. In terms of assembly, homodimer. [4Fe-4S] cluster serves as cofactor.

Functionally, involved in iron-sulfur cluster biogenesis. Binds a 4Fe-4S cluster, can transfer this cluster to apoproteins, and thereby intervenes in the maturation of Fe/S proteins. Could also act as a scaffold/chaperone for damaged Fe/S proteins. The chain is Fe/S biogenesis protein NfuA from Buchnera aphidicola subsp. Cinara cedri (strain Cc).